Consider the following 215-residue polypeptide: MADLHRQLQEYLAQGKAGGPAAAEPLLAAEKAEEPGDRPAEEWLGRAGLRWTWARSPAESAAAGLTCLPSVTRGQRLAAGGGCLLLAALCFGLAALYAPVLLLRARKFALLWSLGSALALAGSALLRGGAACGRLLRCEEAPSRPALLYMAALGATLFAALGLRSTLLTVLGAGAQVAALLAALVGLLPWGGGTALRLALGRLGRGAGLAKVLPV.

Residues 1–82 (MADLHRQLQE…RGQRLAAGGG (82 aa)) are Cytoplasmic-facing. Residues 83 to 103 (CLLLAALCFGLAALYAPVLLL) form a helical membrane-spanning segment. Over 104–107 (RARK) the chain is Lumenal. The helical transmembrane segment at 108–128 (FALLWSLGSALALAGSALLRG) threads the bilayer. The Cytoplasmic segment spans residues 129 to 142 (GAACGRLLRCEEAP). A helical membrane pass occupies residues 143 to 163 (SRPALLYMAALGATLFAALGL). At 164-166 (RST) the chain is on the lumenal side. The chain crosses the membrane as a helical span at residues 167 to 187 (LLTVLGAGAQVAALLAALVGL). The Cytoplasmic portion of the chain corresponds to 188–215 (LPWGGGTALRLALGRLGRGAGLAKVLPV).

This sequence belongs to the SFT2 family.

The protein resides in the membrane. In terms of biological role, may be involved in fusion of retrograde transport vesicles derived from an endocytic compartment with the Golgi complex. The chain is Vesicle transport protein SFT2C from Homo sapiens (Human).